We begin with the raw amino-acid sequence, 481 residues long: MQWEVVIGLEIHTQLATQSKIFSGSATTFGSEPNTQASLVDLGMPGVLPVLNEQAVRMACMFGLAIDAEIGKRNVFARKNYFYPDLPKGYQISQMDLPIVGKGHLDIALEDGTIKRIGVTRAHLEEDAGKSLHEDFSGSTGIDLNRAGTPLLEIVSEPDMRSAKEAVAYVKAIHALVRYLGICDGNMAEGSLRCDCNVSIRPKGQTEFGTRCEIKNVNSFRFIERAINSEIQRQIDLIEDGGKVVQETRLYDPNKDETRSMRSKEEANDYRYFPDPDLLPVVIEDSFLETIRAGLPELPPQKVERFQTQYGLSAYDANVLASSREQADYFEEVVKIGGDAKLAANWVMVELGSLLNKLGVEIDQAPVSAAQLGGMLLRIRDNTISGKIAKTVFEAMAAGEGDADSIIESKGLKQVTDTGAIDKMLDEMLAANAEQVEQYRAADEAKRGKMFGFFVGQAMKASKGKANPGQVNQLLKAKLEG.

The protein belongs to the GatB/GatE family. GatB subfamily. In terms of assembly, heterotrimer of A, B and C subunits.

It catalyses the reaction L-glutamyl-tRNA(Gln) + L-glutamine + ATP + H2O = L-glutaminyl-tRNA(Gln) + L-glutamate + ADP + phosphate + H(+). It carries out the reaction L-aspartyl-tRNA(Asn) + L-glutamine + ATP + H2O = L-asparaginyl-tRNA(Asn) + L-glutamate + ADP + phosphate + 2 H(+). Its function is as follows. Allows the formation of correctly charged Asn-tRNA(Asn) or Gln-tRNA(Gln) through the transamidation of misacylated Asp-tRNA(Asn) or Glu-tRNA(Gln) in organisms which lack either or both of asparaginyl-tRNA or glutaminyl-tRNA synthetases. The reaction takes place in the presence of glutamine and ATP through an activated phospho-Asp-tRNA(Asn) or phospho-Glu-tRNA(Gln). In Pseudomonas putida (strain ATCC 47054 / DSM 6125 / CFBP 8728 / NCIMB 11950 / KT2440), this protein is Aspartyl/glutamyl-tRNA(Asn/Gln) amidotransferase subunit B.